The following is a 491-amino-acid chain: Nucleoside transporter 1.1 (491 aa).

Helical transmembrane passes span 27–47 (FYVY…VNAV), 82–102 (YNLI…LSWF), 109–129 (VRLL…MVVP), 136–156 (AGAV…KSIF), 173–193 (STMM…QIIV), and 209–229 (KIYY…LILL). Over residues 260 to 273 (CHTDEHPTHDKEGR) the composition is skewed to basic and acidic residues. 2 disordered regions span residues 260–280 (CHTD…SGKE) and 290–309 (AAAK…PHEV). An N-linked (GlcNAc...) asparagine glycan is attached at Asn274. Transmembrane regions (helical) follow at residues 333–353 (MFVA…GIAV), 361–381 (WFST…RFSP), 395–415 (WIIV…LLHS), 427–447 (VMEV…LVLG), and 460–480 (FVAG…GTVL).

Belongs to the SLC29A/ENT transporter (TC 2.A.57) family.

The protein localises to the membrane. The catalysed reaction is adenosine(in) + H(+)(in) = adenosine(out) + H(+)(out). It carries out the reaction uridine(in) + H(+)(in) = uridine(out) + H(+)(out). Its function is as follows. Sodium-independent high affinity nucleoside:H(+) symporter; transports adenosine and uridine. Can transport cytidine and thymidine. This chain is Nucleoside transporter 1.1, found in Leishmania donovani.